The primary structure comprises 342 residues: S-adenosylmethionine:tRNA ribosyltransferase-isomerase (342 aa).

It belongs to the QueA family. As to quaternary structure, monomer.

It is found in the cytoplasm. The enzyme catalyses 7-aminomethyl-7-carbaguanosine(34) in tRNA + S-adenosyl-L-methionine = epoxyqueuosine(34) in tRNA + adenine + L-methionine + 2 H(+). It participates in tRNA modification; tRNA-queuosine biosynthesis. Functionally, transfers and isomerizes the ribose moiety from AdoMet to the 7-aminomethyl group of 7-deazaguanine (preQ1-tRNA) to give epoxyqueuosine (oQ-tRNA). The polypeptide is S-adenosylmethionine:tRNA ribosyltransferase-isomerase (Streptococcus pyogenes serotype M2 (strain MGAS10270)).